Here is a 333-residue protein sequence, read N- to C-terminus: Adenosine deaminase (333 aa).

Zn(2+) is bound by residues His12 and His14. Positions 14, 16, and 170 each coordinate substrate. His197 contributes to the Zn(2+) binding site. The active-site Proton donor is the Glu200. Position 278 (Asp278) interacts with Zn(2+). Residue Asp279 coordinates substrate.

This sequence belongs to the metallo-dependent hydrolases superfamily. Adenosine and AMP deaminases family. Adenosine deaminase subfamily. It depends on Zn(2+) as a cofactor.

It carries out the reaction adenosine + H2O + H(+) = inosine + NH4(+). The enzyme catalyses 2'-deoxyadenosine + H2O + H(+) = 2'-deoxyinosine + NH4(+). In terms of biological role, catalyzes the hydrolytic deamination of adenosine and 2-deoxyadenosine. This Aliivibrio fischeri (strain ATCC 700601 / ES114) (Vibrio fischeri) protein is Adenosine deaminase.